Here is a 960-residue protein sequence, read N- to C-terminus: Glycine dehydrogenase (decarboxylating) (960 aa).

N6-(pyridoxal phosphate)lysine is present on Lys-709.

The protein belongs to the GcvP family. The glycine cleavage system is composed of four proteins: P, T, L and H. The cofactor is pyridoxal 5'-phosphate.

It catalyses the reaction N(6)-[(R)-lipoyl]-L-lysyl-[glycine-cleavage complex H protein] + glycine + H(+) = N(6)-[(R)-S(8)-aminomethyldihydrolipoyl]-L-lysyl-[glycine-cleavage complex H protein] + CO2. In terms of biological role, the glycine cleavage system catalyzes the degradation of glycine. The P protein binds the alpha-amino group of glycine through its pyridoxal phosphate cofactor; CO(2) is released and the remaining methylamine moiety is then transferred to the lipoamide cofactor of the H protein. The sequence is that of Glycine dehydrogenase (decarboxylating) from Hahella chejuensis (strain KCTC 2396).